The following is a 331-amino-acid chain: Adenosine deaminase (331 aa).

Zn(2+) contacts are provided by histidine 12 and histidine 14. Substrate is bound by residues histidine 14, aspartate 16, and glycine 170. Zn(2+) is bound at residue histidine 197. Glutamate 200 serves as the catalytic Proton donor. A Zn(2+)-binding site is contributed by aspartate 278. Aspartate 279 is a binding site for substrate.

This sequence belongs to the metallo-dependent hydrolases superfamily. Adenosine and AMP deaminases family. Adenosine deaminase subfamily. It depends on Zn(2+) as a cofactor.

It catalyses the reaction adenosine + H2O + H(+) = inosine + NH4(+). The enzyme catalyses 2'-deoxyadenosine + H2O + H(+) = 2'-deoxyinosine + NH4(+). Functionally, catalyzes the hydrolytic deamination of adenosine and 2-deoxyadenosine. The sequence is that of Adenosine deaminase from Shewanella oneidensis (strain ATCC 700550 / JCM 31522 / CIP 106686 / LMG 19005 / NCIMB 14063 / MR-1).